We begin with the raw amino-acid sequence, 34 residues long: Photosystem II reaction center protein M (34 aa).

The chain crosses the membrane as a helical span at residues 5-25; sequence ILGLIATALFIIIPTSFLLIL.

Belongs to the PsbM family. PSII is composed of 1 copy each of membrane proteins PsbA, PsbB, PsbC, PsbD, PsbE, PsbF, PsbH, PsbI, PsbJ, PsbK, PsbL, PsbM, PsbT, PsbX, PsbY, PsbZ, Psb30/Ycf12, at least 3 peripheral proteins of the oxygen-evolving complex and a large number of cofactors. It forms dimeric complexes.

It is found in the plastid. It localises to the chloroplast thylakoid membrane. In terms of biological role, one of the components of the core complex of photosystem II (PSII). PSII is a light-driven water:plastoquinone oxidoreductase that uses light energy to abstract electrons from H(2)O, generating O(2) and a proton gradient subsequently used for ATP formation. It consists of a core antenna complex that captures photons, and an electron transfer chain that converts photonic excitation into a charge separation. This subunit is found at the monomer-monomer interface. The protein is Photosystem II reaction center protein M of Nephroselmis olivacea (Green alga).